An 80-amino-acid chain; its full sequence is MPYQINIANIKINGVTQNGNIDVGPTVHNSHTANSKYFGANFSLGDLSPTSSLLNTGNIDSDVSDQDQIGNPSAPISNQI.

The segment at 57–80 (GNIDSDVSDQDQIGNPSAPISNQI) is disordered.

This is an uncharacterized protein from Bacillus subtilis (strain 168).